The sequence spans 333 residues: Taste receptor type 2 member 123 (333 aa).

Residues 1–14 lie on the Extracellular side of the membrane; the sequence is MFSQKTNYSHLFTF. The helical transmembrane segment at 15–37 threads the bilayer; that stretch reads SIIFYVEIVTGILGNGFIALVNI. The Cytoplasmic segment spans residues 38–57; that stretch reads MDWLKRRRISTADQILTALA. Residues 58 to 77 form a helical membrane-spanning segment; the sequence is LTRLIYVWSVLICILLLFLC. Residues 78–91 lie on the Extracellular side of the membrane; sequence PHLSMRPEMFTAIG. A helical membrane pass occupies residues 92–114; that stretch reads VIWVVDNHFSIWLATCLGVFYFL. Residues 115 to 133 lie on the Cytoplasmic side of the membrane; that stretch reads KIASFSNSLFLYLKWRVKK. Residues 134-156 form a helical membrane-spanning segment; sequence VVLMIILISLIFLMLNISSLGMY. Over 157 to 204 the chain is Extracellular; that stretch reads DHFSIDVYEGNMSYNLVDSTHFPRIFLFTNSSKVFLIANSSHVFLPIN. N-linked (GlcNAc...) asparagine glycans are attached at residues Asn-167, Asn-186, and Asn-195. A helical membrane pass occupies residues 205 to 227; sequence SLFMLIPFTVSLVAFFVLFLSLW. The Cytoplasmic segment spans residues 228–250; the sequence is KHHKKMQVNAKGPRDASTMAHTK. Residues 251–273 form a helical membrane-spanning segment; the sequence is ALQIGFSFLLLYAIYLLFIITGI. Over 274-282 the chain is Extracellular; it reads LNLDLMRCI. Residues 283–305 traverse the membrane as a helical segment; it reads VILLFDHISGAVFSISHSFVLIL. Topologically, residues 306–333 are cytoplasmic; sequence GNSKLRQATLSVLPCLRCRSKDMDTVVF.

This sequence belongs to the G-protein coupled receptor T2R family. Expressed in subsets of taste receptor cells of the tongue and palate epithelium and exclusively in gustducin-positive cells. Expressed in the antrum and fundus (part of the stomach), duodenum and in gastric endocrine cells.

It is found in the membrane. Gustducin-coupled receptor implicated in the perception of bitter compounds in the oral cavity and the gastrointestinal tract. Signals through PLCB2 and the calcium-regulated cation channel TRPM5. In Rattus norvegicus (Rat), this protein is Taste receptor type 2 member 123 (Tas2r123).